The sequence spans 181 residues: ATP synthase subunit b (181 aa).

Residues 23-43 traverse the membrane as a helical segment; the sequence is FIHIPTFIYTALNLVILYFIL.

This sequence belongs to the ATPase B chain family. As to quaternary structure, F-type ATPases have 2 components, F(1) - the catalytic core - and F(0) - the membrane proton channel. F(1) has five subunits: alpha(3), beta(3), gamma(1), delta(1), epsilon(1). F(0) has three main subunits: a(1), b(2) and c(10-14). The alpha and beta chains form an alternating ring which encloses part of the gamma chain. F(1) is attached to F(0) by a central stalk formed by the gamma and epsilon chains, while a peripheral stalk is formed by the delta and b chains.

It localises to the cell membrane. Functionally, f(1)F(0) ATP synthase produces ATP from ADP in the presence of a proton or sodium gradient. F-type ATPases consist of two structural domains, F(1) containing the extramembraneous catalytic core and F(0) containing the membrane proton channel, linked together by a central stalk and a peripheral stalk. During catalysis, ATP synthesis in the catalytic domain of F(1) is coupled via a rotary mechanism of the central stalk subunits to proton translocation. Component of the F(0) channel, it forms part of the peripheral stalk, linking F(1) to F(0). In Acetivibrio thermocellus (strain ATCC 27405 / DSM 1237 / JCM 9322 / NBRC 103400 / NCIMB 10682 / NRRL B-4536 / VPI 7372) (Clostridium thermocellum), this protein is ATP synthase subunit b.